The sequence spans 647 residues: UvrABC system protein C (647 aa).

Residues 16–95 (VEPGVYRFRD…IKEFDPRFNV (80 aa)) enclose the GIY-YIG domain. The UVR domain maps to 208–243 (DRYARELEQQMNAAAENLDFERAARLRDDRSALKRA).

It belongs to the UvrC family. In terms of assembly, interacts with UvrB in an incision complex.

It localises to the cytoplasm. Functionally, the UvrABC repair system catalyzes the recognition and processing of DNA lesions. UvrC both incises the 5' and 3' sides of the lesion. The N-terminal half is responsible for the 3' incision and the C-terminal half is responsible for the 5' incision. In Mycobacterium marinum (strain ATCC BAA-535 / M), this protein is UvrABC system protein C.